Consider the following 40-residue polypeptide: Antimicrobial peptide 1 (40 aa).

A Chitin-binding type-1 domain is found at Ala1–Lys40. 4 disulfide bridges follow: Cys3–Cys18, Cys12–Cys24, Cys17–Cys31, and Cys35–Cys39.

Not glycosylated.

Its function is as follows. Antimicrobial peptide active against plant pathogenic fungi and Gram-negative and -positive bacteria. This is Antimicrobial peptide 1 from Fagopyrum esculentum (Common buckwheat).